The sequence spans 331 residues: Type 2 lactosamine alpha-2,3-sialyltransferase (331 aa).

Residues 1–4 lie on the Cytoplasmic side of the membrane; sequence MRGY. The helical; Signal-anchor for type II membrane protein transmembrane segment at 5–25 threads the bilayer; it reads LVAIFLSAVFLYYVLHCILWG. The Lumenal portion of the chain corresponds to 26 to 331; that stretch reads TNVYWVAPVE…KNLVINLTQD (306 aa). Residues N129, N181, N282, N295, N308, and N327 are each glycosylated (N-linked (GlcNAc...) asparagine).

This sequence belongs to the glycosyltransferase 29 family.

It localises to the golgi apparatus membrane. The enzyme catalyses a neolactoside nLc4Cer(d18:1(4E)) + CMP-N-acetyl-beta-neuraminate = a neolactoside IV(3)-alpha-NeuAc-nLc4Cer(d18:1(4E)) + CMP + H(+). It catalyses the reaction a beta-D-galactosyl-(1-&gt;4)-N-acetyl-beta-D-glucosaminyl derivative + CMP-N-acetyl-beta-neuraminate = an N-acetyl-alpha-neuraminyl-(2-&gt;3)-beta-D-galactosyl-(1-&gt;4)-N-acetyl-beta-D-glucosaminyl derivative + CMP + H(+). The catalysed reaction is a neolactoside nLc6Cer(d18:1(4E)) + CMP-N-acetyl-beta-neuraminate = a neolactoside VI(3)-alpha-NeuNAc-nLc6Cer(d18:1(4E)) + CMP + H(+). Functionally, transfers the sialyl residue from CMP-N-acetyl-beta-neuraminate to the terminal galactose residue on sugar chains of glycoproteins and glycolipids. It's alpha-2,3-sialyltransferase activity is specific toward type II glycan chains (Galbeta1-4GlcNAc) on glycoproteins and glycolipids such as neolactosides nLc4Cer and nLc6Cer, whose sialyl-products serve as precursors for the Lewis X antigen. Critically involved in the synthesis of functional selectin ligands needed for neutrophil recruitment during inflammation and lymphocyte homing to the lymph nodes. The chain is Type 2 lactosamine alpha-2,3-sialyltransferase (ST3GAL6) from Pan troglodytes (Chimpanzee).